The chain runs to 129 residues: Integration host factor subunit alpha (129 aa).

Positions 87-129 (SALNGEAPPEDHAEIDAREEAAADAAEARGEDFDEEGMEDMEG) are disordered. Residues 95 to 117 (PEDHAEIDAREEAAADAAEARGE) show a composition bias toward basic and acidic residues. Positions 118 to 129 (DFDEEGMEDMEG) are enriched in acidic residues.

It belongs to the bacterial histone-like protein family. Heterodimer of an alpha and a beta chain.

In terms of biological role, this protein is one of the two subunits of integration host factor, a specific DNA-binding protein that functions in genetic recombination as well as in transcriptional and translational control. It is necessary for normal cell growth and the production of carotenoids in response to light. The polypeptide is Integration host factor subunit alpha (ihfA) (Myxococcus xanthus).